An 80-amino-acid chain; its full sequence is MATLPPTAHTSQQPVNIEDEDGILDEYDQYSLAQSYVVGGGRKGRTKREAAANTNRPSPGGHERKLLTKFQNSERKKAWR.

The disordered stretch occupies residues 40–80 (GGRKGRTKREAAANTNRPSPGGHERKLLTKFQNSERKKAWR). A compositionally biased stretch (basic and acidic residues) spans 61-80 (GHERKLLTKFQNSERKKAWR). Positions 64 to 80 (RKLLTKFQNSERKKAWR) match the Nuclear localization signal motif.

The protein belongs to the NUPR family. As to quaternary structure, monomer. Directly interacts with MSL1 and binds MORF4L1, two components of histone acetyltransferase complex; the interaction with MORF4L1 may be mediated by MSL1. Interacts with EP300; this interaction enhances the effect of EP300 on PAX2 transcription factor activity. Interacts with PAXIP1; this interaction prevents PAXIP1 inhibition of PAX2 transcription factor activity. Interacts with COPS5; this interaction allows COPS5-dependent CDKN1B nuclear to cytoplasm translocation. Interacts with RNF2. Interacts with FOXO3; this interaction represses FOXO3 transactivation. Interacts with PTMA; regulates apoptotic process. Interacts with MYOD1, EP300 and DDX5; this interaction coordinates the association of anti-proliferative and pro-myogenic proteins at the myogenin promoter. Interacts with TP53; interaction is stress-dependent. Forms a complex with EP300 and TP53; this complex binds CDKN1A promoter leading to transcriptional induction of CDKN1A. Post-translationally, phosphorylated. Phosphorylation promotes DNA-binding activity. Acetylated. In terms of tissue distribution, strongly activated in pancreatic acinar cells during the acute phase of pancreatitis, in developing pancreas and during pancreatic regeneration.

The protein localises to the nucleus. It localises to the cytoplasm. It is found in the perinuclear region. Its function is as follows. Transcription regulator that converts stress signals into a program of gene expression that empowers cells with resistance to the stress induced by a change in their microenvironment. Thereby participates in the regulation of many processes namely cell-cycle, apoptosis, autophagy and DNA repair responses. Controls cell cycle progression and protects cells from genotoxic stress induced by doxorubicin through the complex formation with TP53 and EP300 that binds CDKN1A promoter leading to transcriptional induction of CDKN1A. Protects pancreatic cancer cells from stress-induced cell death by binding the RELB promoter and activating its transcription, leading to IER3 transactivation. Negatively regulates apoptosis through interaction with PTMA. Inhibits autophagy-induced apoptosis in cardiac cells through FOXO3 interaction, inducing cytoplasmic translocation of FOXO3 thereby preventing the FOXO3 association with the pro-autophagic BNIP3 promoter. Inhibits cell growth and facilitates programmed cell death by apoptosis after adriamycin-induced DNA damage through transactivation of TP53. Regulates methamphetamine-induced apoptosis and autophagy through DDIT3-mediated endoplasmic reticulum stress pathway. Participates in DNA repair following gamma-irradiation by facilitating DNA access of the transcription machinery through interaction with MSL1 leading to inhibition of histone H4' Lys-16' acetylation (H4K16ac). Coactivator of PAX2 transcription factor activity, both by recruiting the EP300 cofactor to increase PAX2 transcription factor activity and by binding PAXIP1 to suppress PAXIP1-induced inhibition on PAX2. Positively regulates cell cycle progression through interaction with COPS5 inducing cytoplasmic translocation of CDKN1B leading to the CDKN1B degradation. Coordinates, through its interaction with EP300, the assiociation of MYOD1, EP300 and DDX5 to the MYOG promoter, leading to inhibition of cell-cycle progression and myogenic differentiation promotion. Negatively regulates beta cell proliferation via inhibition of cell-cycle regulatory genes expression through the suppression of their promoter activities. Also required for LHB expression and ovarian maturation. Exacerbates CNS inflammation and demyelination upon cuprizone treatment. This chain is Nuclear protein 1, found in Rattus norvegicus (Rat).